Consider the following 350-residue polypeptide: Protein RecA (350 aa).

67-74 (GPESSGKT) contacts ATP.

It belongs to the RecA family.

The protein resides in the cytoplasm. Functionally, can catalyze the hydrolysis of ATP in the presence of single-stranded DNA, the ATP-dependent uptake of single-stranded DNA by duplex DNA, and the ATP-dependent hybridization of homologous single-stranded DNAs. It interacts with LexA causing its activation and leading to its autocatalytic cleavage. The sequence is that of Protein RecA from Mycobacterium avium (strain 104).